We begin with the raw amino-acid sequence, 1350 residues long: 1-phosphatidylinositol 4,5-bisphosphate phosphodiesterase gamma plc-3 (1350 aa).

A disordered region spans residues 1-40; it reads MQHGSLGPSSSSRKTTVTSTAGSVHLHHRSSNGFSTASRA. A compositionally biased stretch (low complexity) spans 9–20; the sequence is SSSSRKTTVTST. The segment covering 31 to 40 has biased composition (polar residues); the sequence is SNGFSTASRA. One can recognise a PI-PLC X-box domain in the interval 352-503; the sequence is HDMSRPLSHY…LKKKIIVKHK (152 aa). Residues histidine 367 and histidine 419 contribute to the active site. A disordered region spans residues 570 to 594; it reads NPNDDTVSVSGDEEREEETPSGFGV. SH2 domains lie at 605–704 and 715–804; these read WFHG…TIPC and WFSA…RFPV. The 59-residue stretch at 832-890 folds into the SH3 domain; sequence DKEVQARALRPYRGTADDELSFPANVIITVLRKEEGLWRGRYGSLTGWFPSAHVQEILP. The 106-residue stretch at 855–960 folds into the PH domain; sequence ANVIITVLRK…WQNNLFELTR (106 aa). The PI-PLC Y-box domain maps to 982-1092; sequence LSNLVVYCQA…CGYLLKPDYM (111 aa). Residues 1099 to 1220 enclose the C2 domain; the sequence is PTNTEKFATA…CGFRSVPLKN (122 aa). The tract at residues 1270–1350 is disordered; that stretch reads GDSIPREMAP…KFSFGKSSKS (81 aa). Positions 1283-1329 are enriched in polar residues; it reads TSATDRSLDSPTNSESRATLLSGQRGSQDSMDSAAETSSIASGTISS. Residues 1340–1350 show a composition bias toward low complexity; sequence KKFSFGKSSKS.

Ca(2+) serves as cofactor. Expressed in intestine, isthmus of the pharynx, proximal gonad sheath cells, spermatheca and uterine sheath cells. In males, expressed in the valve cell, the vas deferens and retractor and ventral protactor muscles.

It catalyses the reaction a 1,2-diacyl-sn-glycero-3-phospho-(1D-myo-inositol-4,5-bisphosphate) + H2O = 1D-myo-inositol 1,4,5-trisphosphate + a 1,2-diacyl-sn-glycerol + H(+). Its function is as follows. Mediates the production of the second messenger molecules diacylglycerol (DAG) and inositol 1,4,5-trisphosphate (IP3) which plays an important role in the regulation of intracellular signaling cascades. Regulates basal and ovulatory sheath cell contractions by controlling Ca(2+) oscillations via IP3-mediated activation of IP3 receptor itr-1. In intestinal epithelial cells, regulates Ca(2+) oscillations which control posterior body wall muscle contractions required for defecation by IP3-mediated activation of itr-1 and probably by activating TRPM channels gon-2 and gtl-1 by reducing PIP2 levels. By activating tpa-1 via DAG production, required for the expression of antimicrobial peptide nlp-29 in the epidermis in response to fungal infection or physical injury. By triggering Ca(2+) transient via IP3-mediated activation of IPR3 receptor itr-1 in ASH sensory neurons, involved in avoidance behavior in response to nose touch. Probably by regulating neuronal transmission in ALA neurons, mediates the decrease in pharyngeal pumping and locomotion during the quiescent state that precedes each larval molt, downstream of lin-3 and receptor let-23 and upstream of tpa-1 but not itr-1. During embryogenesis, may play an role in epidermal morphogenesis together with plc-1. Probably downstream of receptor daf-2, regulates male-sex muscle excitability in the absence of food. The protein is 1-phosphatidylinositol 4,5-bisphosphate phosphodiesterase gamma plc-3 of Caenorhabditis elegans.